A 331-amino-acid polypeptide reads, in one-letter code: Meiotic recombination protein W68 (331 aa).

In terms of domain architecture, Topo IIA-type catalytic spans M1–L120. The active-site O-(5'-phospho-DNA)-tyrosine intermediate is Y81. Residues E167 and D221 each coordinate Mg(2+).

This sequence belongs to the TOP6A family. Mg(2+) is required as a cofactor.

Its subcellular location is the nucleus. It carries out the reaction ATP-dependent breakage, passage and rejoining of double-stranded DNA.. Its function is as follows. Required for meiotic recombination. Together with mei-P22, mediates DNA cleavage that forms the double-strand breaks (DSB) that initiate meiotic recombination. The sequence is that of Meiotic recombination protein W68 from Drosophila melanogaster (Fruit fly).